The primary structure comprises 333 residues: Protoheme IX farnesyltransferase (333 aa).

Helical transmembrane passes span L64–L84, T110–V130, L133–L153, I161–G181, W189–L209, I246–F266, and A287–I307.

The protein belongs to the UbiA prenyltransferase family. Protoheme IX farnesyltransferase subfamily.

It is found in the cell inner membrane. The catalysed reaction is heme b + (2E,6E)-farnesyl diphosphate + H2O = Fe(II)-heme o + diphosphate. It functions in the pathway porphyrin-containing compound metabolism; heme O biosynthesis; heme O from protoheme: step 1/1. Its function is as follows. Converts heme B (protoheme IX) to heme O by substitution of the vinyl group on carbon 2 of heme B porphyrin ring with a hydroxyethyl farnesyl side group. This Prochlorococcus marinus (strain AS9601) protein is Protoheme IX farnesyltransferase.